A 744-amino-acid polypeptide reads, in one-letter code: Scytalone dehydratase-like protein Arp1 (744 aa).

Y621 serves as a coordination point for substrate. Catalysis depends on residues H656 and H681. N702 contacts substrate.

It belongs to the scytalone dehydratase family. In terms of assembly, homotrimer. Each subunit contains an active site, located in the central part of the hydrophobic core of the monomer, which functions independently.

In terms of biological role, scytalone dehydratase-like protein; part of the Pks2 gene cluster that mediates the formation of infectious structures (appressoria), enabling these fungi to kill insects faster. The product of the Pks2 gene cluster is different from the one of Pks1 and has still not been identified. This is Scytalone dehydratase-like protein Arp1 from Metarhizium brunneum (strain ARSEF 3297).